The primary structure comprises 216 residues: Probable transaldolase (216 aa).

K83 acts as the Schiff-base intermediate with substrate in catalysis.

Belongs to the transaldolase family. Type 3B subfamily.

The protein localises to the cytoplasm. The catalysed reaction is D-sedoheptulose 7-phosphate + D-glyceraldehyde 3-phosphate = D-erythrose 4-phosphate + beta-D-fructose 6-phosphate. It functions in the pathway carbohydrate degradation; pentose phosphate pathway; D-glyceraldehyde 3-phosphate and beta-D-fructose 6-phosphate from D-ribose 5-phosphate and D-xylulose 5-phosphate (non-oxidative stage): step 2/3. Its function is as follows. Transaldolase is important for the balance of metabolites in the pentose-phosphate pathway. This Symbiobacterium thermophilum (strain DSM 24528 / JCM 14929 / IAM 14863 / T) protein is Probable transaldolase.